A 656-amino-acid polypeptide reads, in one-letter code: Methylenetetrahydrofolate reductase (NADPH) (656 aa).

Over residues M1–N12 the composition is skewed to polar residues. Residues M1 to R44 form a disordered region. A phosphoserine mark is found at S9, S10, S18, S20, S21, S23, S25, S26, S29, and S30. At T34 the chain carries Phosphothreonine. The active-site Proton donor/acceptor is E63. E63 to R68 contributes to the NAD(+) binding site. Y90 bears the Phosphotyrosine mark. Residue T94 is modified to Phosphothreonine. T94–W95 lines the NAD(+) pocket. T94–W95 is a binding site for FAD. Phosphoserine is present on S103. FAD contacts are provided by residues H127, R157–D159, Y174–A175, Y197, H201–A204, D210, and K217. D159 provides a ligand contact to substrate. The substrate site is built by Q228, Y321, and R325. S394 carries the phosphoserine modification. T451 bears the Phosphothreonine mark. S-adenosyl-L-methionine is bound by residues N456, A461–T464, T481–Q485, T560, and T573.

It belongs to the methylenetetrahydrofolate reductase family. Homodimer. The cofactor is FAD. Phosphorylation of an N-terminal serine-rich phosphorylation region increases sensitivity to S-adenosylmethionine and inhibition.

The enzyme catalyses (6S)-5-methyl-5,6,7,8-tetrahydrofolate + NADP(+) = (6R)-5,10-methylene-5,6,7,8-tetrahydrofolate + NADPH + H(+). It functions in the pathway one-carbon metabolism; tetrahydrofolate interconversion. With respect to regulation, allosterically regulated by S-adenosylmethionine (SAM). Its function is as follows. Catalyzes the conversion of 5,10-methylenetetrahydrofolate to 5-methyltetrahydrofolate, a cosubstrate for homocysteine remethylation to methionine. Represents a key regulatory connection between the folate and methionine cycles. The polypeptide is Methylenetetrahydrofolate reductase (NADPH) (Homo sapiens (Human)).